A 213-amino-acid chain; its full sequence is CASP-like protein 2A1 (213 aa).

Topologically, residues 1 to 41 (MSKMAEEKAAAVGGLGGAGAADAAQQQQLAAGEAAAARVRP) are cytoplasmic. The helical transmembrane segment at 42–62 (VETLLRAAPLGLCVAAMTVML) threads the bilayer. Over 63 to 83 (RNQQSNEYGAVAYSDLGGFKY) the chain is Extracellular. Residues 84 to 104 (LVYANGLCAAYSLVSAFYTAV) traverse the membrane as a helical segment. Residues 105-113 (PRPATVSRS) lie on the Cytoplasmic side of the membrane. A helical transmembrane segment spans residues 114–134 (WLVFLLDQVFTYLILAAGAAA). At 135–166 (AELLYLAYNGDKEVTWSEACGVFGSFCRQART) the chain is on the extracellular side. Residues 167–187 (SVAITFGTVLCFILLSLISSY) form a helical membrane-spanning segment. Residues 188-213 (RLFSAYEAPPSSALGSKGVEIAAYPR) are Cytoplasmic-facing.

It belongs to the Casparian strip membrane proteins (CASP) family. In terms of assembly, homodimer and heterodimers.

The protein localises to the cell membrane. This chain is CASP-like protein 2A1, found in Zea mays (Maize).